A 474-amino-acid polypeptide reads, in one-letter code: MSKKLHIKTWGCQMNEYDSSKMADLLGEYQGYTLTEEAEEADILLLNTCSIREKAQEKVFHQLGRWKTLKDKNPDLIIGVGGCVASQEGKAIKDRAQCVDIIFGPQTLHRLPEMIEQVRRGEKAVIDVSFPEIEKFDRLPEPRAEGPTAFVSIMEGCSKYCSFCVVPYTRGEEVSRPSDDIILEIAQLAEQGVREVNLLGQNVNAYRGATHDGGICTFAELLRYVAAIDGIDRIRFTTSHPIEFTQDIIDVYEDTPELVSFLHLPVQSGSDRILTAMKRGHMAIEYKSIIRRLRKARPDIQISSDFIIGFPGETQEDFADTMKLIEDVAFDHSFSFIYSARPGTPAADLPDDVDMEEKKQRLAILQDRITQQAMRYSRHMMGTVQRILVEGPSVKNPMELRGRTENNRVVNFEGLPKHIGTFVDVEIVDVYTNSLRGKFIRGEDEMDLRRNLRPSDILAKHKQDDDLGVTQFKP.

Positions 3–120 (KKLHIKTWGC…LPEMIEQVRR (118 aa)) constitute an MTTase N-terminal domain. Positions 12, 49, 83, 157, 161, and 164 each coordinate [4Fe-4S] cluster. The Radical SAM core domain occupies 143–375 (RAEGPTAFVS…QDRITQQAMR (233 aa)). The region spanning 378–441 (RHMMGTVQRI…TNSLRGKFIR (64 aa)) is the TRAM domain.

This sequence belongs to the methylthiotransferase family. MiaB subfamily. Monomer. Requires [4Fe-4S] cluster as cofactor.

It is found in the cytoplasm. It catalyses the reaction N(6)-dimethylallyladenosine(37) in tRNA + (sulfur carrier)-SH + AH2 + 2 S-adenosyl-L-methionine = 2-methylsulfanyl-N(6)-dimethylallyladenosine(37) in tRNA + (sulfur carrier)-H + 5'-deoxyadenosine + L-methionine + A + S-adenosyl-L-homocysteine + 2 H(+). Its function is as follows. Catalyzes the methylthiolation of N6-(dimethylallyl)adenosine (i(6)A), leading to the formation of 2-methylthio-N6-(dimethylallyl)adenosine (ms(2)i(6)A) at position 37 in tRNAs that read codons beginning with uridine. This is tRNA-2-methylthio-N(6)-dimethylallyladenosine synthase from Shewanella oneidensis (strain ATCC 700550 / JCM 31522 / CIP 106686 / LMG 19005 / NCIMB 14063 / MR-1).